A 112-amino-acid chain; its full sequence is uncharacterized protein (112 aa).

The disordered stretch occupies residues 90 to 112 (KNFNNSKNDQIKKKKIDNNQVNL).

This is an uncharacterized protein from Buchnera aphidicola subsp. Acyrthosiphon pisum (strain APS) (Acyrthosiphon pisum symbiotic bacterium).